We begin with the raw amino-acid sequence, 254 residues long: Bacteriorhodopsin-I (254 aa).

The propeptide occupies 1-6 (MSQLAL). Position 7 is a pyrrolidone carboxylic acid (Gln7). A run of 7 helical transmembrane segments spans residues 16–36 (EGIWLALGTIGMLLGMLYFIA), 51–71 (VITILIPAIAAASYLSMFFGF), 91–111 (YADWLFTTPLLLLDIGLLAGA), 116–136 (IGALVGIDAFMIVTGLVATLT), 144–164 (AFWTISTISMVFLLYYLVAVF), 185–205 (IILVTWAIYPVAWLVGTEGLA), and 212–232 (ETLLFMVLDLVAKVGFGFILL). Lys224 carries the post-translational modification N6-(retinylidene)lysine.

It belongs to the archaeal/bacterial/fungal opsin family. The covalent binding of retinal to the apoprotein, bacterioopsin, generates bacteriorhodopsin.

It is found in the cell membrane. Light-driven proton pump. This is Bacteriorhodopsin-I (bop1) from Haloquadratum walsbyi (strain DSM 16854 / JCM 12705 / C23).